The primary structure comprises 370 residues: Quinolinate synthase (370 aa).

Iminosuccinate-binding residues include histidine 62 and serine 83. A [4Fe-4S] cluster-binding site is contributed by cysteine 128. Residues 154–156 (YAN) and serine 171 contribute to the iminosuccinate site. Residue cysteine 215 coordinates [4Fe-4S] cluster. Iminosuccinate-binding positions include 241 to 243 (HPE) and threonine 258. Cysteine 312 is a [4Fe-4S] cluster binding site.

This sequence belongs to the quinolinate synthase family. Type 1 subfamily. [4Fe-4S] cluster is required as a cofactor.

Its subcellular location is the cytoplasm. The catalysed reaction is iminosuccinate + dihydroxyacetone phosphate = quinolinate + phosphate + 2 H2O + H(+). The protein operates within cofactor biosynthesis; NAD(+) biosynthesis; quinolinate from iminoaspartate: step 1/1. Catalyzes the condensation of iminoaspartate with dihydroxyacetone phosphate to form quinolinate. This is Quinolinate synthase from Neisseria meningitidis serogroup B (strain ATCC BAA-335 / MC58).